The following is a 285-amino-acid chain: UPF0603 protein At1g54780, chloroplastic (285 aa).

Disordered stretches follow at residues 1 to 48 (METL…LSTR) and 228 to 251 (GQPDPGGPTVKDSKRESNFKTKEE). Positions 22–40 (HQTKPTSHSLSLSKPTTFS) are enriched in polar residues. The segment covering 238 to 251 (KDSKRESNFKTKEE) has biased composition (basic and acidic residues). A helical transmembrane segment spans residues 259–279 (FSLVVGGLLVIAFVVPMAQYF).

It belongs to the UPF0603 family.

Its subcellular location is the plastid. It is found in the chloroplast thylakoid membrane. This Arabidopsis thaliana (Mouse-ear cress) protein is UPF0603 protein At1g54780, chloroplastic.